The primary structure comprises 1119 residues: Transient receptor potential cation channel subfamily A member 1 (1119 aa).

Over 1–718 (MKRSLRKMWR…MKWLAYGFRA (718 aa)) the chain is Cytoplasmic. ANK repeat units lie at residues 62 to 92 (MDTFFLHYAAAEGQIELMEKITRDSSLEVLH), 97 to 126 (YGNTPLHCAVEKNQIESVKFLLSRGANPNL), 130 to 160 (NMMAPLHIAVQGMNNEVMKVLLEHRTIDVNL), 164 to 193 (NGNTAVIIACTTNNSEALQILLKKGAKPCK), 197 to 226 (WGCFPIHQAAFSGSKECMEIILRFGEEHGY), 238 to 267 (GKATPLHLAVQNGDLEMIKMCLDNGAQIDP), 271 to 301 (GRCTAIHFAATQGATEIVKLMISSYSGSVDI), 308 to 337 (CHETMLHRASLFDHHELADYLISVGADINK), 341 to 370 (EGRSPLILATASASWNIVNLLLSKGAQVDI), 374 to 403 (FGRNFLHLTVQQPYGLKNLRPEFMQMQQIK), 412 to 441 (DGCTPLHYACRQGGPGSVNNLLGFNVSIHS), 445 to 474 (DKKSPLHFAASYGRINTCQRLLQDISDTRL), 481 to 510 (HGMTPLHLAAKNGHDKVVQLLLKKGALFLS), 513 to 542 (NGWTALHHASMGGYTQTMKVILDTNLKCTD), 547 to 576 (DGNTALHFAAREGHAKAVALLLSHNADIVL), and 579 to 609 (QQASFLHLALHNKRKEVVLTIIRSKRWDECL). 5 disulfides stabilise this stretch: cysteine 192–cysteine 665, cysteine 462–cysteine 665, cysteine 608–cysteine 621, cysteine 621–cysteine 665, and cysteine 633–cysteine 856. Position 394 is a 4-hydroxyproline; by EGLN1; transient; in normoxia and hyperoxia (proline 394). (E)-cinnamaldehyde is bound by residues cysteine 414 and cysteine 421. Cysteine 621 is a binding site for (E)-cinnamaldehyde. Cysteine 633 bears the Cysteine sulfenic acid (-SOH); transient; in hyperoxia mark. The (E)-cinnamaldehyde site is built by cysteine 641, cysteine 665, and lysine 710. Residues 719–739 (HMMNLGSYCLGLIPMTILVVN) form a helical membrane-spanning segment. Residues 740–767 (IKPGMAFNSTGIINETSDHSEILDTTNS) are Extracellular-facing. Residues asparagine 747 and asparagine 753 are each glycosylated (N-linked (GlcNAc...) asparagine). The helical transmembrane segment at 768–793 (YLIKTCMILVFLSSIFGYCKEAGQIF) threads the bilayer. Positions 788 and 791 each coordinate Ca(2+). Over 794–798 (QQKRN) the chain is Cytoplasmic. A helical membrane pass occupies residues 799 to 823 (YFMDISNVLEWIIYTTGIIFVLPLF). Ca(2+)-binding residues include asparagine 805 and glutamate 808. The Extracellular segment spans residues 824–829 (VEIPAH). Residues 830–850 (LQWQCGAIAVYFYWMNFLLYL) traverse the membrane as a helical segment. Residues 851-862 (QRFENCGIFIVM) are Cytoplasmic-facing. Cysteine sulfenic acid (-SOH); transient; in hyperoxia is present on cysteine 856. A helical membrane pass occupies residues 863-892 (LEVILKTLLRSTVVFIFLLLAFGLSFYILL). Over 893–901 (NLQDPFSSP) the chain is Extracellular. Residues 902 to 922 (LLSIIQTFSMMLGDINYRESF) constitute an intramembrane region (pore-forming). The Extracellular segment spans residues 923 to 933 (LEPYLRNELAH). Residues 934 to 960 (PVLSFAQLVSFTIFVPIVLMNLLIGLA) traverse the membrane as a helical segment. Topologically, residues 961–1119 (VGDIAEVQKH…VKAKTHHLEP (159 aa)) are cytoplasmic. Residues 1042-1071 (MEILKQKYRLKDLTFLLEKQHELIKLIIQK) adopt a coiled-coil conformation. A 1,2-diacyl-sn-glycero-3-phospho-(1D-myo-inositol) is bound at residue 1046–1052 (KQKYRLK).

The protein belongs to the transient receptor (TC 1.A.4) family. In terms of assembly, homotetramer. Interacts with TMEM100. Interacts with EGLN1. Interacts with the scorpion wasabi receptor toxin at the same site that electrophiles but in a non-covalent manner. In terms of processing, TRPA1 activation by electrophiles occurs though covalent modification of specific cysteine residues in the N-terminal cytoplasmic domain. Post-translationally, hydroxylation is required for TRPA1 activity inhibition in normoxia. In hypoxia, the decrease in oxygen concentration diminishes the activity of the hydroxylase EGLN1, thus relieving TRPA1 from inhibition and ultimately leading to channel activation. Oxidation of Cys-633 and Cys-856 in hyperoxia may override the hydroxylase EGLN1-mediated inhibition, causing TRPA1 activation.

Its subcellular location is the cell membrane. The enzyme catalyses Ca(2+)(in) = Ca(2+)(out). It carries out the reaction Mg(2+)(in) = Mg(2+)(out). The catalysed reaction is Na(+)(in) = Na(+)(out). It catalyses the reaction K(+)(in) = K(+)(out). The enzyme catalyses Zn(2+)(in) = Zn(2+)(out). Its activity is regulated as follows. Electrophilic ligands activate the channel by covalent modification of intracellular cysteines; Cys-621 plays a key role in covalent binding of electrophiles. Extracellular Ca(2+) both potentiates and inactivates TRPA1; a rapid potentiation follows by slow desensitization. Activated by increase in intracellular Ca(2+) concentration. Inhibited by the potent blocker of TRPV channels ruthenium red, A-967079, AP-18, HC-030031, and aryl sulfonamide derivative (S)-N-(4-chlorobenzyl)-1-((4-fluorophenyl)sulfonyl)pyrrolidine-2-carboxamide (ASD). Activated by benzyl isothiocyanate (BITC), iodoacetamide, sulfhydryl reactive agent MTSEA, N-methyl maleimide (NMM), N-ethylmaleimide (NEM), and 2-aminoethyldiphenylborinate (2-APB). Also activated by hyperoxia. Acivated by intracellular Zn(2+). TRPA1 activation may critically depend on the presence of small intracellular compounds such as polyphosphates. Its function is as follows. Ligand-activated Ca(2+)-permeable, nonselective cation channel involved in pain detection and possibly also in cold perception, oxygen concentration perception, cough, itch, and inner ear function. Has a relatively high Ca(2+) selectivity, with a preference for divalent over monovalent cations (Ca(2+) &gt; Ba(2+) &gt; Mg(2+) &gt; NH4(+) &gt; Li(+) &gt; K(+)), the influx of cation into the cytoplasm leads to membrane depolarization. Has a central role in the pain response to endogenous inflammatory mediators, such as bradykinin and to a diverse array of irritants. Activated by a large variety of structurally unrelated electrophilic and non-electrophilic chemical compounds, such as allylthiocyanate (AITC) from mustard oil or wasabi, cinnamaldehyde, diallyl disulfide (DADS) from garlic, and acrolein, an environmental irritant. Electrophilic ligands activate TRPA1 by interacting with critical N-terminal Cys residues in a covalent manner. Non-electrophile agonists bind at distinct sites in the transmembrane domain to promote channel activation. Also acts as an ionotropic cannabinoid receptor by being activated by delta(9)-tetrahydrocannabinol (THC), the psychoactive component of marijuana. May be a component for the mechanosensitive transduction channel of hair cells in inner ear, thereby participating in the perception of sounds. The sequence is that of Transient receptor potential cation channel subfamily A member 1 from Homo sapiens (Human).